The sequence spans 605 residues: Elongation factor 4 (605 aa).

Positions 8-190 constitute a tr-type G domain; that stretch reads RRVRNFCIVA…AIITRIPPPQ (183 aa). GTP contacts are provided by residues 20–25 and 137–140; these read DHGKST and NKID.

The protein belongs to the TRAFAC class translation factor GTPase superfamily. Classic translation factor GTPase family. LepA subfamily.

It is found in the cell inner membrane. The catalysed reaction is GTP + H2O = GDP + phosphate + H(+). Functionally, required for accurate and efficient protein synthesis under certain stress conditions. May act as a fidelity factor of the translation reaction, by catalyzing a one-codon backward translocation of tRNAs on improperly translocated ribosomes. Back-translocation proceeds from a post-translocation (POST) complex to a pre-translocation (PRE) complex, thus giving elongation factor G a second chance to translocate the tRNAs correctly. Binds to ribosomes in a GTP-dependent manner. The sequence is that of Elongation factor 4 from Treponema pallidum (strain Nichols).